Consider the following 1328-residue polypeptide: Myb-binding protein 1A (1328 aa).

The tract at residues 1 to 22 (MESRDPAQPMSPGEATQSGARP) is disordered. The tract at residues 1–582 (MESRDPAQPM…WDRMLQTLKE (582 aa)) is interaction with MYB. Serine 11 carries the phosphoserine modification. Lysine 71 and lysine 158 each carry N6-acetyllysine. Short sequence motifs (nuclear export signal) lie at residues 240–258 (SDEN…ASSV) and 263–281 (KLPA…EDKF). The tract at residues 698 to 753 (SEDENDRVVVTDDSDERRLKGAEDKSEEGEDNRSSESEEESEGEESEEEERDGDVD) is disordered. The segment covering 703-721 (DRVVVTDDSDERRLKGAED) has biased composition (basic and acidic residues). Residues 734–752 (SEEESEGEESEEEERDGDV) show a composition bias toward acidic residues. Serine 775 is modified (phosphoserine). The disordered stretch occupies residues 1146–1292 (RPKLEKKDAK…KKGVLGKSPL (147 aa)). Residues 1147-1156 (PKLEKKDAKE) show a composition bias toward basic and acidic residues. Lysine 1148 participates in a covalent cross-link: Glycyl lysine isopeptide (Lys-Gly) (interchain with G-Cter in SUMO2). The interval 1151–1328 (KKDAKEIPSA…KAQVRKAGKP (178 aa)) is required for nuclear and nucleolar localization. Residues serine 1159 and serine 1163 each carry the phosphoserine modification. Over residues 1166–1184 (SKKRKKKGFLPETKKRKKR) the composition is skewed to basic residues. Serine 1186 is modified (phosphoserine). A phosphothreonine mark is found at threonine 1190 and threonine 1196. Phosphoserine is present on serine 1207. The segment covering 1209–1218 (GRKKRNRTKA) has biased composition (basic residues). Phosphoserine is present on serine 1232. Threonine 1239 is modified (phosphothreonine). Position 1241 is a phosphoserine (serine 1241). Threonine 1244 is subject to Phosphothreonine. Phosphoserine occurs at positions 1248 and 1267. Threonine 1269 is modified (phosphothreonine). Phosphoserine is present on residues serine 1290 and serine 1303. Residues 1306 to 1328 (IRSPSLLQSGAKKKAQVRKAGKP) are disordered. Arginine 1307 carries the post-translational modification Citrulline. 3 positions are modified to phosphoserine: serine 1308, serine 1310, and serine 1314. A compositionally biased stretch (basic residues) spans 1316 to 1328 (AKKKAQVRKAGKP).

This sequence belongs to the MYBBP1A family. In terms of assembly, binds to and represses JUN and MYB via the leucine zipper regions present in these proteins. Also binds to and represses PPARGC1A: this interaction is abrogated when PPARGC1A is phosphorylated by MAPK1/ERK. Binds to and stimulates transcription by AHR. Binds to KPNA2. Interacts with CLOCK and CRY1. Component of the B-WICH complex, at least composed of SMARCA5/SNF2H, BAZ1B/WSTF, SF3B1, DEK, MYO1C, ERCC6, MYBBP1A and DDX21. Post-translationally, citrullinated by PADI4.

It is found in the cytoplasm. The protein resides in the nucleus. It localises to the nucleolus. Functionally, may activate or repress transcription via interactions with sequence specific DNA-binding proteins. Repression may be mediated at least in part by histone deacetylase activity (HDAC activity). Acts as a corepressor and in concert with CRY1, represses the transcription of the core circadian clock component PER2. Preferentially binds to dimethylated histone H3 'Lys-9' (H3K9me2) on the PER2 promoter. Has a role in rRNA biogenesis together with PWP1. The chain is Myb-binding protein 1A (MYBBP1A) from Homo sapiens (Human).